The primary structure comprises 343 residues: UDP-3-O-acylglucosamine N-acyltransferase (343 aa).

Histidine 238 functions as the Proton acceptor in the catalytic mechanism.

Belongs to the transferase hexapeptide repeat family. LpxD subfamily. Homotrimer.

It carries out the reaction a UDP-3-O-[(3R)-3-hydroxyacyl]-alpha-D-glucosamine + a (3R)-hydroxyacyl-[ACP] = a UDP-2-N,3-O-bis[(3R)-3-hydroxyacyl]-alpha-D-glucosamine + holo-[ACP] + H(+). The protein operates within bacterial outer membrane biogenesis; LPS lipid A biosynthesis. Functionally, catalyzes the N-acylation of UDP-3-O-acylglucosamine using 3-hydroxyacyl-ACP as the acyl donor. Is involved in the biosynthesis of lipid A, a phosphorylated glycolipid that anchors the lipopolysaccharide to the outer membrane of the cell. The chain is UDP-3-O-acylglucosamine N-acyltransferase from Marinomonas sp. (strain MWYL1).